The primary structure comprises 816 residues: Phosphatidylinositol 4-kinase beta (816 aa).

The segment at 1-30 (MGDTVVEPAPLKPTSEPTSGPPGNNGGSLL) is disordered. An N-acetylglycine modification is found at Gly2. The region spanning 29 to 242 (LLSVITEGVG…GTKLRKLILS (214 aa)) is the PIK helical domain. The interval 41–67 (SVIDPEVAQKACQEVLEKVKLLHGGVA) is interaction with ACBD3. Disordered regions lie at residues 101-120 (EDEMGAAVASGTAKGARRRR) and 248-318 (AHRK…SFSS). Ser258 is subject to Phosphoserine. The residue at position 263 (Thr263) is a Phosphothreonine. A phosphoserine mark is found at Ser266, Ser275, Ser277, Ser284, and Ser294. Composition is skewed to polar residues over residues 278–297 (DATASISLSSNLKRTASNPK) and 306–318 (SSSTESIDNSFSS). At Ser428 the chain carries Phosphoserine. Thr438 bears the Phosphothreonine mark. Ser511 carries the post-translational modification Phosphoserine. A phosphothreonine mark is found at Thr517 and Thr519. The 267-residue stretch at 535–801 (EPWQEKVRRI…MVDGSMRSIT (267 aa)) folds into the PI3K/PI4K catalytic domain. A G-loop region spans residues 541–547 (VRRIREG). The segment at 668 to 676 (QVKDRHNGN) is catalytic loop. Residues 687 to 711 (HIDFGFILSSSPRNLGFETSAFKLT) form an activation loop region.

The protein belongs to the PI3/PI4-kinase family. Type III PI4K subfamily. As to quaternary structure, interacts with ARF1 and ARF3 in the Golgi complex, but not with ARF4, ARF5 or ARF6. Interacts with NCS1/FREQ in a calcium-independent manner. Interacts with CALN1/CABP8 and CALN2/CABP7; in a calcium-dependent manner; this interaction competes with NCS1/FREQ binding. Interacts with ACBD3. Interacts with ARMH3, YWHAB, YWHAE, YWHAG, YWHAH, YWHAQ, YWHAZ and SFN. Interacts with GGA2 (via VHS domain); the interaction is important for PI4KB location at the Golgi apparatus membrane. Interacts with ATG9A. In terms of assembly, (Microbial infection) Interacts with Aichi virus protein 3A. Part of a complex Aichi virus protein 3A/ACBD3/PI4KB that allows the synthesis of PI4P at the viral RNA replication sites. The cofactor is Mg(2+). Requires Mn(2+) as cofactor. Widely expressed with highest levels in heart, skeletal muscle, pancreas, testis and ovary. Weakly expressed in liver. Expressed in the innear ear in the epithelium of the spinal organ of corti.

The protein resides in the endomembrane system. It localises to the mitochondrion outer membrane. Its subcellular location is the rough endoplasmic reticulum membrane. It is found in the golgi apparatus. The protein localises to the golgi apparatus membrane. The protein resides in the cytoplasm. It localises to the perinuclear region. It carries out the reaction a 1,2-diacyl-sn-glycero-3-phospho-(1D-myo-inositol) + ATP = a 1,2-diacyl-sn-glycero-3-phospho-(1D-myo-inositol 4-phosphate) + ADP + H(+). Its activity is regulated as follows. Inhibited by wortmannin and adenosine. Increased kinase activity upon interaction with NCS1/FREQ. With respect to regulation, (Microbial infection) Activated by Aichi virus protein 3A, this activation is sensitized by ACBD3. Functionally, phosphorylates phosphatidylinositol (PI) in the first committed step in the production of the second messenger inositol-1,4,5,-trisphosphate (PIP). May regulate Golgi disintegration/reorganization during mitosis, possibly via its phosphorylation. Involved in Golgi-to-plasma membrane trafficking. May play an important role in the inner ear development. Its function is as follows. (Microbial infection) Plays an essential role in Aichi virus RNA replication. Recruited by ACBD3 at the viral replication sites. In terms of biological role, (Microbial infection) Required for cellular spike-mediated entry of human coronavirus SARS-CoV. The sequence is that of Phosphatidylinositol 4-kinase beta from Homo sapiens (Human).